The primary structure comprises 208 residues: Uracil phosphoribosyltransferase (208 aa).

5-phospho-alpha-D-ribose 1-diphosphate-binding positions include arginine 78, arginine 103, and 130–138; that span reads DPMLATGGS. Residues isoleucine 193 and 198 to 200 each bind uracil; that span reads GDA. Aspartate 199 lines the 5-phospho-alpha-D-ribose 1-diphosphate pocket.

Belongs to the UPRTase family. Mg(2+) serves as cofactor.

The enzyme catalyses UMP + diphosphate = 5-phospho-alpha-D-ribose 1-diphosphate + uracil. Its pathway is pyrimidine metabolism; UMP biosynthesis via salvage pathway; UMP from uracil: step 1/1. Its activity is regulated as follows. Allosterically activated by GTP. Catalyzes the conversion of uracil and 5-phospho-alpha-D-ribose 1-diphosphate (PRPP) to UMP and diphosphate. This chain is Uracil phosphoribosyltransferase, found in Actinobacillus pleuropneumoniae serotype 5b (strain L20).